We begin with the raw amino-acid sequence, 305 residues long: UDP-N-acetylenolpyruvoylglucosamine reductase (305 aa).

Positions 22 to 190 (KVGGAADFFA…LSARFRLQAG (169 aa)) constitute an FAD-binding PCMH-type domain. Arginine 169 is an active-site residue. Serine 220 serves as the catalytic Proton donor. Glutamate 290 is a catalytic residue.

This sequence belongs to the MurB family. It depends on FAD as a cofactor.

Its subcellular location is the cytoplasm. It catalyses the reaction UDP-N-acetyl-alpha-D-muramate + NADP(+) = UDP-N-acetyl-3-O-(1-carboxyvinyl)-alpha-D-glucosamine + NADPH + H(+). The protein operates within cell wall biogenesis; peptidoglycan biosynthesis. Cell wall formation. This Synechococcus sp. (strain RCC307) protein is UDP-N-acetylenolpyruvoylglucosamine reductase.